The sequence spans 136 residues: Small ribosomal subunit protein uS9 (136 aa).

The interval 96–136 (LSPDNRKPLKTEGHLSRDPRAKERRKYGLKKARKAPQFSKR) is disordered. A compositionally biased stretch (basic and acidic residues) spans 98 to 116 (PDNRKPLKTEGHLSRDPRA). The segment covering 117 to 136 (KERRKYGLKKARKAPQFSKR) has biased composition (basic residues).

The protein belongs to the universal ribosomal protein uS9 family.

In Prochlorococcus marinus (strain MIT 9515), this protein is Small ribosomal subunit protein uS9.